Reading from the N-terminus, the 237-residue chain is Ribosomal RNA small subunit methyltransferase G (237 aa).

Residues G78, F83, 129-130, and R148 contribute to the S-adenosyl-L-methionine site; that span reads AE.

Belongs to the methyltransferase superfamily. RNA methyltransferase RsmG family.

It localises to the cytoplasm. Its function is as follows. Specifically methylates the N7 position of a guanine in 16S rRNA. This is Ribosomal RNA small subunit methyltransferase G from Streptococcus pyogenes serotype M49 (strain NZ131).